The primary structure comprises 217 residues: GTP cyclohydrolase 1 (217 aa).

Zn(2+) contacts are provided by Cys-108, His-111, and Cys-179.

The protein belongs to the GTP cyclohydrolase I family. Toroid-shaped homodecamer, composed of two pentamers of five dimers.

It catalyses the reaction GTP + H2O = 7,8-dihydroneopterin 3'-triphosphate + formate + H(+). Its pathway is cofactor biosynthesis; 7,8-dihydroneopterin triphosphate biosynthesis; 7,8-dihydroneopterin triphosphate from GTP: step 1/1. In Shewanella denitrificans (strain OS217 / ATCC BAA-1090 / DSM 15013), this protein is GTP cyclohydrolase 1.